The following is a 547-amino-acid chain: Chaperonin GroEL (547 aa).

ATP-binding positions include 30 to 33 (TLGP), Lys-51, 87 to 91 (DGTTT), Gly-415, 479 to 481 (NAA), and Asp-495.

The protein belongs to the chaperonin (HSP60) family. In terms of assembly, forms a cylinder of 14 subunits composed of two heptameric rings stacked back-to-back. Interacts with the co-chaperonin GroES.

It is found in the cytoplasm. It carries out the reaction ATP + H2O + a folded polypeptide = ADP + phosphate + an unfolded polypeptide.. In terms of biological role, together with its co-chaperonin GroES, plays an essential role in assisting protein folding. The GroEL-GroES system forms a nano-cage that allows encapsulation of the non-native substrate proteins and provides a physical environment optimized to promote and accelerate protein folding. This Cupriavidus metallidurans (strain ATCC 43123 / DSM 2839 / NBRC 102507 / CH34) (Ralstonia metallidurans) protein is Chaperonin GroEL.